Reading from the N-terminus, the 1023-residue chain is RTX-I toxin determinant A from serotypes 1/9 (1023 aa).

The next 3 helical transmembrane spans lie at 226-256 (NNLP…ILSN), 297-326 (STTA…ADKF), and 367-406 (INSV…SGIL). 6 Hemolysin-type calcium-binding repeats span residues 730-747 (FGSR…DDEI), 748-765 (YGND…NDVI), 766-783 (HGGD…NDRL), 784-801 (IGGK…DDEL), 812-829 (LGGA…TNLF), and 830-847 (DGGV…KDIY).

This sequence belongs to the RTX prokaryotic toxin (TC 1.C.11) family. Palmitoylated by ApxIC. The toxin only becomes active when modified.

The protein resides in the secreted. It localises to the host cell membrane. In terms of biological role, one of the virulence factors of A.pleuropneumoniae, which has a strong hemolytic activity and is cytotoxic for alveolar macrophages and neutrophils. This chain is RTX-I toxin determinant A from serotypes 1/9 (apxIA), found in Actinobacillus pleuropneumoniae (Haemophilus pleuropneumoniae).